The following is an 85-amino-acid chain: ATP synthase subunit c (85 aa).

The next 2 membrane-spanning stretches (helical) occupy residues 10–30 and 53–73; these read IAVG…FALL and FIIA…ALLF.

The protein belongs to the ATPase C chain family. In terms of assembly, F-type ATPases have 2 components, F(1) - the catalytic core - and F(0) - the membrane proton channel. F(1) has five subunits: alpha(3), beta(3), gamma(1), delta(1), epsilon(1). F(0) has three main subunits: a(1), b(2) and c(10-14). The alpha and beta chains form an alternating ring which encloses part of the gamma chain. F(1) is attached to F(0) by a central stalk formed by the gamma and epsilon chains, while a peripheral stalk is formed by the delta and b chains.

It localises to the cell inner membrane. F(1)F(0) ATP synthase produces ATP from ADP in the presence of a proton or sodium gradient. F-type ATPases consist of two structural domains, F(1) containing the extramembraneous catalytic core and F(0) containing the membrane proton channel, linked together by a central stalk and a peripheral stalk. During catalysis, ATP synthesis in the catalytic domain of F(1) is coupled via a rotary mechanism of the central stalk subunits to proton translocation. Its function is as follows. Key component of the F(0) channel; it plays a direct role in translocation across the membrane. A homomeric c-ring of between 10-14 subunits forms the central stalk rotor element with the F(1) delta and epsilon subunits. This chain is ATP synthase subunit c, found in Aliivibrio fischeri (strain ATCC 700601 / ES114) (Vibrio fischeri).